A 440-amino-acid chain; its full sequence is Lysine histidine transporter-like 6 (440 aa).

The span at 1–10 shows a compositional bias: polar residues; the sequence is MVSSSPVSPS. Residues 1 to 25 form a disordered region; it reads MVSSSPVSPSKETDRKSGEKWTAED. The Cytoplasmic portion of the chain corresponds to 1-31; it reads MVSSSPVSPSKETDRKSGEKWTAEDPSRPAK. Basic and acidic residues predominate over residues 11–25; sequence KETDRKSGEKWTAED. The chain crosses the membrane as a helical span at residues 32–51; sequence WWYSTFHTVTAMIGAGVLSL. Residues 52–61 lie on the Extracellular side of the membrane; the sequence is PYAMAYLGWG. Residues 62-82 traverse the membrane as a helical segment; the sequence is PGTFVLAMTWGLTLNTMWQMV. The Cytoplasmic segment spans residues 83-109; it reads QLHECVPGTRFDRYIDLGRYAFGPKLG. The chain crosses the membrane as a helical span at residues 110 to 130; sequence PWIVLPQQLIVQVGCNIVYMV. The Extracellular portion of the chain corresponds to 131-152; it reads TGGKCLKQFVEITCSTCTPVRQ. Residues 153-173 traverse the membrane as a helical segment; that stretch reads SYWILGFGGVHFILSQLPNFN. A topological domain (cytoplasmic) is located at residue S174. The helical transmembrane segment at 175-195 threads the bilayer; the sequence is VAGVSLAAAVMSLCYSTIAWG. At 196–221 the chain is on the extracellular side; sequence GSIAHGRVPDVSYDYKATNPGDFTFR. Residues 222 to 242 traverse the membrane as a helical segment; sequence VFNALGQISFAFAGHAVALEI. At 243-261 the chain is on the cytoplasmic side; sequence QATMPSTPERPSKVPMWQG. A helical membrane pass occupies residues 262-282; sequence VIGAYVVNAVCYFPVALICYW. Residues 283-300 are Extracellular-facing; that stretch reads AFGQDVDDNVLMNLQRPA. The chain crosses the membrane as a helical span at residues 301–321; the sequence is WLIAAANLMVVVHVIGSYQVF. The Cytoplasmic segment spans residues 322–353; that stretch reads AMPVFDLLERMMVNKFGFKHGVVLRFFTRTIY. The next 2 helical transmembrane spans lie at 354–374 and 375–395; these read VAFT…LGFF and GGFG…LIIK. At 396 to 399 the chain is on the cytoplasmic side; the sequence is KPRR. Residues 400 to 420 traverse the membrane as a helical segment; sequence FSVTWFVNWISIIVGVFIMLA. At 421 to 440 the chain is on the extracellular side; that stretch reads STIGGLRNIIADSSTYSFYA.

This sequence belongs to the amino acid/polyamine transporter 2 family. Amino acid/auxin permease (AAAP) (TC 2.A.18.2) subfamily.

The protein localises to the cell membrane. Amino acid transporter. This Arabidopsis thaliana (Mouse-ear cress) protein is Lysine histidine transporter-like 6.